The chain runs to 409 residues: Arginine deiminase (409 aa).

The active-site Amidino-cysteine intermediate is the Cys-399.

It belongs to the arginine deiminase family.

The protein localises to the cytoplasm. It catalyses the reaction L-arginine + H2O = L-citrulline + NH4(+). The protein operates within amino-acid degradation; L-arginine degradation via ADI pathway; carbamoyl phosphate from L-arginine: step 1/2. This chain is Arginine deiminase, found in Streptococcus sanguinis (strain SK36).